Here is a 533-residue protein sequence, read N- to C-terminus: MKKRKSNAVNAAQVLESSVSPILEINYSDPLFTLAAHPTEPVLISGLVTGHVFCHRYDAEALEEKQSARREQLLLQEKEAFKKGKVSQISKSVSQSKNPWWTIIKDHTEVPQESGVVASWKTKRHKGSCRHAIFEPLESSVGENIFTVGTDHIIKKASSETGKVVGKVDVSLDFPNSNDSITKLCHSATNSCLLAGTENGHVLVYDSKNLGGSKLKYKVSSAHDDAVNHILAMPAVSAYHYLTLGSTTLSHIDIRKGIITQSDNQDDELLSMCFATDQINDGKNDTVLVGHGEGIVTIWKNSKNRFMDQLTRIKVNKEASIDAIIPTMNCDDDEMAASVWCGDSEGLLHRVNYKKGKVVETRVHSSSRGKYGAADEVGLLEIDYDYRLISAGMESLKIWSNEQNEEIALDESDDSDDESDSDNSEDDLSSGSLSDTASDEEIEENKEEEDEKEDKPVKIDHPLANRSKKGLVGVSKHVTKKKQIDINKLTKKGKEEEEEEQPQKKKPKKDQLSTKQLRNMQKHEHGIRRFDDL.

WD repeat units lie at residues 26-67 (NYSD…EKQS), 84-130 (GKVS…GSCR), 176-215 (NSND…GSKL), 264-309 (NQDD…FMDQ), and 372-409 (GAAD…EIAL). Composition is skewed to acidic residues over residues 408–428 (ALDE…EDDL) and 437–452 (ASDE…EDEK). Residues 408–533 (ALDESDDSDD…EHGIRRFDDL (126 aa)) form a disordered region. Composition is skewed to basic and acidic residues over residues 453–463 (EDKPVKIDHPL) and 521–533 (QKHE…FDDL).

Belongs to the WD repeat WDR55 family.

Its subcellular location is the nucleus. It is found in the nucleolus. The protein is WD repeat-containing protein JIP5 (JIP5) of Scheffersomyces stipitis (strain ATCC 58785 / CBS 6054 / NBRC 10063 / NRRL Y-11545) (Yeast).